The primary structure comprises 625 residues: Threonine--tRNA ligase (625 aa).

The editing domain stretch occupies residues 1–149 (MRVLLIHAKR…RNYEAKTTAR (149 aa)). 2 catalytic regions span residues 197 to 494 (NPVN…PYIP) and 198 to 494 (PVNK…PYIP). 3 residues coordinate Zn(2+): Cys-291, His-342, and His-463.

Belongs to the class-II aminoacyl-tRNA synthetase family. As to quaternary structure, homodimer. It depends on Zn(2+) as a cofactor.

The protein localises to the cytoplasm. The catalysed reaction is tRNA(Thr) + L-threonine + ATP = L-threonyl-tRNA(Thr) + AMP + diphosphate + H(+). Catalyzes the attachment of threonine to tRNA(Thr) in a two-step reaction: L-threonine is first activated by ATP to form Thr-AMP and then transferred to the acceptor end of tRNA(Thr). Also edits incorrectly charged L-seryl-tRNA(Thr). The polypeptide is Threonine--tRNA ligase (Hyperthermus butylicus (strain DSM 5456 / JCM 9403 / PLM1-5)).